Reading from the N-terminus, the 230-residue chain is Putative N-acetylmannosamine-6-phosphate 2-epimerase (230 aa).

It belongs to the NanE family.

It carries out the reaction an N-acyl-D-glucosamine 6-phosphate = an N-acyl-D-mannosamine 6-phosphate. Its pathway is amino-sugar metabolism; N-acetylneuraminate degradation; D-fructose 6-phosphate from N-acetylneuraminate: step 3/5. In terms of biological role, converts N-acetylmannosamine-6-phosphate (ManNAc-6-P) to N-acetylglucosamine-6-phosphate (GlcNAc-6-P). This is Putative N-acetylmannosamine-6-phosphate 2-epimerase from Malacoplasma penetrans (strain HF-2) (Mycoplasma penetrans).